The following is an 87-amino-acid chain: Small ribosomal subunit protein bS18 (87 aa).

The protein belongs to the bacterial ribosomal protein bS18 family. As to quaternary structure, part of the 30S ribosomal subunit. Forms a tight heterodimer with protein bS6.

Binds as a heterodimer with protein bS6 to the central domain of the 16S rRNA, where it helps stabilize the platform of the 30S subunit. This Nitratidesulfovibrio vulgaris (strain ATCC 29579 / DSM 644 / CCUG 34227 / NCIMB 8303 / VKM B-1760 / Hildenborough) (Desulfovibrio vulgaris) protein is Small ribosomal subunit protein bS18.